The following is a 1400-amino-acid chain: MIQTGEEDEEKATSLEVEFASGNGVDDEEELRLQWATVERLPTFKRVTTALLARDEVSGKGRVIDVTRLEGAERRLLIEMLVKQIEDDNLRLLRKIRKRIDKVGIELPTVEVRFNNLSVEAECQVIHGKPIPTLWNTIKGLLSEFICSKKETKIGILKGVSGIVRPGRMTLLLGPPGCGKTTLLQALSGKFSDSVKVGGEVCYNGCSLSEFIPEKTSSYISQNDLHIPELSVRETLDFSACCQGIGSRMEIMKEISRMEKLQEIIPDPAVDAYMKATSVEGLKNNLQTDYILKILGLDICADTRVGDATRPGISGGEKRRLTTGELVVGPATTLFMDEISNGLDSSTTFQIVSCLQQLAHIAEATILISLLQPAPETFELFDDVILMGEGKIIYHAPRADICRFFEEFGFKCPERKGVADFLQEIMSKKDQEQYWCHRDKPYSYISVDSFINKFKESNLGLLLKEELSKPFNKSQTRKDGLCYKKYSLGKWEMLKACSRREFLLMKRNSFIYLFKSALLVFNALVTMTVFLQVGATTDSLHGNYLMGSLFTALFRLLADGLPELTLTISRLGVFCKQKDLYFYPAWAYAIPSIILKIPLSVLDSFIWTLLTYYVIGYSPEVKRFFLQFLILSTFNLSCVSMFRAIAAIFRTIIASTITGAISILVLSLFGGFVIPKSSMPAWLGWGFWLSPLSYAEIGLTANEFFSPRWSKVISSKTTAGEQMLDIRGLNFGRHSYWTAFGALVGFVLFFNALYVLALTYQNNPQRSRAIISHEKYSRPIEEDFKPCPKITSRAKTGKIILPFKPLTVTFQNVQYYIETPQGKTRQLLSDITGALKPGVLTSLMGVSGAGKTTLLDVLSGRKTRGIIKGEIKVGGYPKVQETFARVSGYCEQFDIHSPNITVEESLKYSAWLRLPYNIDSKTKNELVKEVLETVELDDIKDSVVGLPGISGLSIEQRKRLTIAVELVANPSIIFMDEPTTGLDARAAAIVMRAVKNVAETGRTVVCTIHQPSIDIFETFDELILMKNGGQLVYYGPPGQNSSKVIEYFESFSGLPKIQKNCNPATWILDITSKSAEEKLGIDFSQSYKDSTLYKQNKMVVEQLSSASLGSEALRFPSQFSQTAWVQLKACLWKQHYSYWRNPSHNITRIVFILLDSTLCGLLFWQKAEDINNQQDLISIFGSMYTLVVFPGMNNCAAVINFIAAERNVFYRERFARMYSSWAYSFSQVLIEVPYSLLQSLLCTIIVYPTIGYHMSVYKMFWSLYSIFCSLLIFNYSGMLMVALTPNIHMAVTLRSSFFSMLNLFAGFVIPKQKIPKWWIWMYYLSPTSWVLEGLLSSQYGDVDKEILVFGEKKRVSAFLEDYFGYKHESLAVVAFVLIAYPIIVATLFAFFMSKLSFQKK.

Asparagine 116 is a glycosylation site (N-linked (GlcNAc...) asparagine). The ABC transporter 1 domain maps to 141–414; that stretch reads LLSEFICSKK…FEEFGFKCPE (274 aa). Residue 174–181 participates in ATP binding; that stretch reads GPPGCGKT. N-linked (GlcNAc...) asparagine glycosylation occurs at asparagine 472. The region spanning 492–704 is the ABC transmembrane type-2 1 domain; the sequence is EMLKACSRRE…AEIGLTANEF (213 aa). Helical transmembrane passes span 510–530, 553–573, 582–602, 628–648, 652–672, 679–699, and 738–758; these read FIYL…MTVF, LFRL…RLGV, FYPA…LSVL, FLIL…IAAI, IIAS…FGGF, MPAW…EIGL, and TAFG…VLAL. The 246-residue stretch at 808–1053 folds into the ABC transporter 2 domain; that stretch reads VTFQNVQYYI…VIEYFESFSG (246 aa). 845–852 contributes to the ATP binding site; the sequence is GVSGAGKT. 2 N-linked (GlcNAc...) asparagine glycosylation sites follow: asparagine 899 and asparagine 1040. In terms of domain architecture, ABC transmembrane type-2 2 spans 1125-1339; it reads VQLKACLWKQ…VLEGLLSSQY (215 aa). The next 7 helical transmembrane spans lie at 1144–1164, 1179–1199, 1228–1248, 1263–1283, 1289–1309, 1317–1337, and 1372–1392; these read HNIT…LLFW, IFGS…AAVI, VLIE…IVYP, LYSI…MVAL, MAVT…GFVI, WWIW…LLSS, and VVAF…AFFM.

This sequence belongs to the ABC transporter superfamily. ABCG family. PDR (TC 3.A.1.205) subfamily. As to expression, confined to roots. In seeds, mainly expressed in the embryo and, to a lesser extent, in the endosperm.

The protein localises to the cell membrane. The catalysed reaction is abscisate(out) + ATP + H2O = abscisate(in) + ADP + phosphate + H(+). In terms of biological role, together with ABCG40, import into the embryo the abscisic acid (ABA) delivered from the endosperm via ABCG25 and ABCG31-mediated export to suppress radicle extension and subsequent embryonic growth. Involved in root secretion of phytochemicals (phenolics and sugars) which regulate soil microbiota, influencing both fungal and bacterial communities. May be a general defense protein. This Arabidopsis thaliana (Mouse-ear cress) protein is ABC transporter G family member 30.